Consider the following 160-residue polypeptide: MSVSVCPCGSGNLLDACCGHYHAGTPAPDAQALMRSRYSAYVLGLIDYLVATTLPAQQAGLDRNAIAAWSAQSTWLGLEVENAEVLGGQPEHAFVTFTARWHDLEGDHQHRERSAFVQHDGRWYFIDPTVELKAGRNDPCPCNSGQKFKKCCASYWGNRA.

Belongs to the UPF0225 family.

The sequence is that of UPF0225 protein PputW619_1140 from Pseudomonas putida (strain W619).